Reading from the N-terminus, the 358-residue chain is Trace amine-associated receptor 7d (358 aa).

Over 1–47 (MRVDDDRFPWDQDSILSRDLLSASSLQLCYENLNRSCVRSPYSPGPR) the chain is Extracellular. Residue Asn34 is glycosylated (N-linked (GlcNAc...) asparagine). 2 disulfides stabilise this stretch: Cys37–Cys201 and Cys120–Cys205. Residues 48 to 68 (LILYAVFGFGAVLAVCGNLMV) traverse the membrane as a helical segment. At 69–83 (MTSILHFRQLHSPAN) the chain is on the cytoplasmic side. A helical membrane pass occupies residues 84 to 104 (FLVASLACADFLVGLTVMPFS). Residues 105–122 (MVRSVEGCWYFGDTYCKL) lie on the Extracellular side of the membrane. The chain crosses the membrane as a helical span at residues 123–143 (HTCFDVSFCYCSLFHLCFISV). The Cytoplasmic portion of the chain corresponds to 144-166 (DRYIAVSDPLIYPTRFTASVSGK). Residues 167–187 (CITFSWLLSIIYGFPLIYTGA) form a helical membrane-spanning segment. At 188–212 (SEAGLEDLVSALTCVGGCQIPMNQK) the chain is on the extracellular side. A helical transmembrane segment spans residues 213-233 (FVLINFLLFLVPTLVMMTVYS). At 234 to 274 (KIFLIARQQAQNIEKMRKQTARASESYKDRVCKRERKAAKT) the chain is on the cytoplasmic side. Residues 275–295 (LGIAVAAFLLSWLPYFIDSII) form a helical membrane-spanning segment. The Extracellular portion of the chain corresponds to 296 to 309 (DAFLGFITPTYVYE). Residues 310-333 (ILIWIVYYNSSMNPLIYAFFYPWF) form a helical membrane-spanning segment. Over 334–358 (RKATKLIVTGKILRENSSTINLFPE) the chain is Cytoplasmic.

Belongs to the G-protein coupled receptor 1 family.

It localises to the cell membrane. In terms of biological role, olfactory receptor specific for N,N-dimethylalkylamines trace amines, such as N,N-dimethylcyclohexylamine. Trace amine compounds are enriched in animal body fluids and act on trace amine-associated receptors (TAARs) to elicit both intraspecific and interspecific innate behaviors. Ligand-binding causes a conformation change that triggers signaling via G(s)-class of G alpha proteins (GNAL or GNAS). The protein is Trace amine-associated receptor 7d of Rattus norvegicus (Rat).